We begin with the raw amino-acid sequence, 141 residues long: D-aminoacyl-tRNA deacylase (141 aa).

The Gly-cisPro motif, important for rejection of L-amino acids motif lies at 133–134; it reads GP.

This sequence belongs to the DTD family. Homodimer.

The protein resides in the cytoplasm. The catalysed reaction is glycyl-tRNA(Ala) + H2O = tRNA(Ala) + glycine + H(+). The enzyme catalyses a D-aminoacyl-tRNA + H2O = a tRNA + a D-alpha-amino acid + H(+). Functionally, an aminoacyl-tRNA editing enzyme that deacylates mischarged D-aminoacyl-tRNAs. Also deacylates mischarged glycyl-tRNA(Ala), protecting cells against glycine mischarging by AlaRS. Acts via tRNA-based rather than protein-based catalysis; rejects L-amino acids rather than detecting D-amino acids in the active site. By recycling D-aminoacyl-tRNA to D-amino acids and free tRNA molecules, this enzyme counteracts the toxicity associated with the formation of D-aminoacyl-tRNA entities in vivo and helps enforce protein L-homochirality. This is D-aminoacyl-tRNA deacylase from Streptomyces coelicolor (strain ATCC BAA-471 / A3(2) / M145).